The primary structure comprises 56 residues: Large ribosomal subunit protein bL32 (56 aa).

The interval 1–37 (MAVQQNKKSRSKRGMRRSHDALSTAQLSVDATSGELH) is disordered. A compositionally biased stretch (basic residues) spans 7–16 (KKSRSKRGMR). The span at 21-31 (ALSTAQLSVDA) shows a compositional bias: polar residues.

It belongs to the bacterial ribosomal protein bL32 family.

This Shewanella pealeana (strain ATCC 700345 / ANG-SQ1) protein is Large ribosomal subunit protein bL32.